The following is a 404-amino-acid chain: Formate-dependent phosphoribosylglycinamide formyltransferase (404 aa).

Residues 27–28 and E87 each bind N(1)-(5-phospho-beta-D-ribosyl)glycinamide; that span reads EL. ATP contacts are provided by residues R120, K162, 167–172, 202–205, and E210; these read SSGKGQ and EGFI. The ATP-grasp domain maps to 125–320; sequence RLAAETLGLP…EFELHARALL (196 aa). The Mg(2+) site is built by E279 and E291. Residues D298, K367, and 374-375 contribute to the N(1)-(5-phospho-beta-D-ribosyl)glycinamide site; that span reads RR.

The protein belongs to the PurK/PurT family. Homodimer.

It catalyses the reaction N(1)-(5-phospho-beta-D-ribosyl)glycinamide + formate + ATP = N(2)-formyl-N(1)-(5-phospho-beta-D-ribosyl)glycinamide + ADP + phosphate + H(+). The protein operates within purine metabolism; IMP biosynthesis via de novo pathway; N(2)-formyl-N(1)-(5-phospho-D-ribosyl)glycinamide from N(1)-(5-phospho-D-ribosyl)glycinamide (formate route): step 1/1. Involved in the de novo purine biosynthesis. Catalyzes the transfer of formate to 5-phospho-ribosyl-glycinamide (GAR), producing 5-phospho-ribosyl-N-formylglycinamide (FGAR). Formate is provided by PurU via hydrolysis of 10-formyl-tetrahydrofolate. The protein is Formate-dependent phosphoribosylglycinamide formyltransferase of Bordetella pertussis (strain Tohama I / ATCC BAA-589 / NCTC 13251).